The primary structure comprises 258 residues: Small ribosomal subunit protein mS40 (258 aa).

The transit peptide at 1–35 directs the protein to the mitochondrion; that stretch reads MAASVLNTVLRRLPMLSLFRGSHRVQVPLQTLCTK. Phosphoserine is present on residues S38 and S49. The segment at 214–258 is disordered; it reads SRLRRLYQGHLQEESGPPPESMPKMPPRTPAEASSTGQTGPQSAL. Positions 229 to 242 are enriched in pro residues; it reads GPPPESMPKMPPRT. Over residues 245 to 258 the composition is skewed to polar residues; it reads EASSTGQTGPQSAL.

It belongs to the bacterial ribosomal protein bS18 family. Mitochondrion-specific ribosomal protein mS40 subfamily. In terms of assembly, component of the mitochondrial small ribosomal subunit (mt-SSU). Mature mammalian 55S mitochondrial ribosomes consist of a small (28S) and a large (39S) subunit. The 28S small subunit contains a 12S ribosomal RNA (12S mt-rRNA) and 30 different proteins. The 39S large subunit contains a 16S rRNA (16S mt-rRNA), a copy of mitochondrial valine transfer RNA (mt-tRNA(Val)), which plays an integral structural role, and 52 different proteins. mS40 has a zinc binding site.

It localises to the mitochondrion. In Homo sapiens (Human), this protein is Small ribosomal subunit protein mS40 (MRPS18B).